The chain runs to 368 residues: N-acetylneuraminate epimerase (368 aa).

The signal sequence occupies residues 1 to 19 (MNKTITALAIMMASFAANA). Kelch repeat units lie at residues 40-84 (TVYI…AFID), 86-137 (NLYV…FVHN), 139-173 (KAYV…KINA), 174-219 (HYFD…VNKG), 222-265 (TWLI…VAGG), 287-336 (ENYQ…PWNN), and 338-367 (LLII…VTVQ). Glu-228 (proton acceptor) is an active-site residue.

It belongs to the NanM family. In terms of assembly, homodimer.

It localises to the periplasm. The catalysed reaction is N-acetyl-alpha-neuraminate = N-acetyl-beta-neuraminate. Its function is as follows. Converts alpha-N-acetylneuranimic acid (Neu5Ac) to the beta-anomer, accelerating the equilibrium between the alpha- and beta-anomers. Probably facilitates sialidase-negative bacteria to compete successfully for limited amounts of extracellular Neu5Ac, which is likely taken up in the beta-anomer. In addition, the rapid removal of sialic acid from solution might be advantageous to the bacterium to damp down host responses. In Escherichia coli O9:H4 (strain HS), this protein is N-acetylneuraminate epimerase.